The chain runs to 188 residues: Methylated-DNA--protein-cysteine methyltransferase (188 aa).

3 residues coordinate DNA: Y120, G121, and R134. C151 functions as the Nucleophile; methyl group acceptor in the catalytic mechanism. S157 provides a ligand contact to DNA.

This sequence belongs to the MGMT family.

It is found in the nucleus. The enzyme catalyses a 6-O-methyl-2'-deoxyguanosine in DNA + L-cysteinyl-[protein] = S-methyl-L-cysteinyl-[protein] + a 2'-deoxyguanosine in DNA. The catalysed reaction is a 4-O-methyl-thymidine in DNA + L-cysteinyl-[protein] = a thymidine in DNA + S-methyl-L-cysteinyl-[protein]. Functionally, involved in the cellular defense against the biological effects of O6-methylguanine (O6-MeG) and O4-methylthymine (O4-MeT) in DNA. Repairs the methylated nucleobase in DNA by stoichiometrically transferring the methyl group to a cysteine residue in the enzyme. This is a suicide reaction: the enzyme is irreversibly inactivated. Prefers double-stranded DNA over single-stranded DNA as substrate. The protein is Methylated-DNA--protein-cysteine methyltransferase (MGT1) of Saccharomyces cerevisiae (strain ATCC 204508 / S288c) (Baker's yeast).